The chain runs to 54 residues: Large ribosomal subunit protein bL33A (54 aa).

This sequence belongs to the bacterial ribosomal protein bL33 family.

The polypeptide is Large ribosomal subunit protein bL33A (Mycolicibacterium paratuberculosis (strain ATCC BAA-968 / K-10) (Mycobacterium paratuberculosis)).